A 158-amino-acid polypeptide reads, in one-letter code: 2-C-methyl-D-erythritol 2,4-cyclodiphosphate synthase (158 aa).

A divalent metal cation contacts are provided by aspartate 9 and histidine 11. 4-CDP-2-C-methyl-D-erythritol 2-phosphate contacts are provided by residues 9–11 (DVH) and 35–36 (HS). Position 43 (histidine 43) interacts with a divalent metal cation. 4-CDP-2-C-methyl-D-erythritol 2-phosphate is bound by residues 57–59 (DIG), 62–66 (FPDTD), 101–107 (AQKPKMA), 133–136 (TTTE), phenylalanine 140, and arginine 143.

It belongs to the IspF family. Homotrimer. The cofactor is a divalent metal cation.

It carries out the reaction 4-CDP-2-C-methyl-D-erythritol 2-phosphate = 2-C-methyl-D-erythritol 2,4-cyclic diphosphate + CMP. It participates in isoprenoid biosynthesis; isopentenyl diphosphate biosynthesis via DXP pathway; isopentenyl diphosphate from 1-deoxy-D-xylulose 5-phosphate: step 4/6. Involved in the biosynthesis of isopentenyl diphosphate (IPP) and dimethylallyl diphosphate (DMAPP), two major building blocks of isoprenoid compounds. Catalyzes the conversion of 4-diphosphocytidyl-2-C-methyl-D-erythritol 2-phosphate (CDP-ME2P) to 2-C-methyl-D-erythritol 2,4-cyclodiphosphate (ME-CPP) with a corresponding release of cytidine 5-monophosphate (CMP). This chain is 2-C-methyl-D-erythritol 2,4-cyclodiphosphate synthase, found in Bacillus cereus (strain ATCC 10987 / NRS 248).